We begin with the raw amino-acid sequence, 319 residues long: tRNA uridine(34) hydroxylase (319 aa).

In terms of domain architecture, Rhodanese spans 127–221 (KQEDTVIIDA…YGKDPEVQGE (95 aa)). The active-site Cysteine persulfide intermediate is the Cys-181.

It belongs to the TrhO family.

It catalyses the reaction uridine(34) in tRNA + AH2 + O2 = 5-hydroxyuridine(34) in tRNA + A + H2O. Catalyzes oxygen-dependent 5-hydroxyuridine (ho5U) modification at position 34 in tRNAs. This Bacillus cereus (strain B4264) protein is tRNA uridine(34) hydroxylase.